An 80-amino-acid chain; its full sequence is RNA-binding protein Hfq (80 aa).

The 61-residue stretch at 10–70 (DAFLNQVRKE…ISTISPLRPV (61 aa)) folds into the Sm domain.

The protein belongs to the Hfq family. Homohexamer.

Functionally, RNA chaperone that binds small regulatory RNA (sRNAs) and mRNAs to facilitate mRNA translational regulation in response to envelope stress, environmental stress and changes in metabolite concentrations. Also binds with high specificity to tRNAs. The sequence is that of RNA-binding protein Hfq from Desulforamulus reducens (strain ATCC BAA-1160 / DSM 100696 / MI-1) (Desulfotomaculum reducens).